We begin with the raw amino-acid sequence, 342 residues long: ATP-dependent (S)-NAD(P)H-hydrate dehydratase (342 aa).

The YjeF C-terminal domain occupies 11–337 (ILPALEKVVP…EYLGHRLFTF (327 aa)). Residues glycine 127 and 180-186 (NVMEHKR) each bind (6S)-NADPHX. ATP is bound by residues 229-233 (KGKTD) and 248-257 (GSPRRCGGQG). Position 258 (aspartate 258) interacts with (6S)-NADPHX.

It belongs to the NnrD/CARKD family. Mg(2+) serves as cofactor.

It catalyses the reaction (6S)-NADHX + ATP = ADP + phosphate + NADH + H(+). The enzyme catalyses (6S)-NADPHX + ATP = ADP + phosphate + NADPH + H(+). Functionally, catalyzes the dehydration of the S-form of NAD(P)HX at the expense of ATP, which is converted to ADP. Together with NAD(P)HX epimerase, which catalyzes the epimerization of the S- and R-forms, the enzyme allows the repair of both epimers of NAD(P)HX, a damaged form of NAD(P)H that is a result of enzymatic or heat-dependent hydration. This is ATP-dependent (S)-NAD(P)H-hydrate dehydratase from Physcomitrium patens (Spreading-leaved earth moss).